A 416-amino-acid polypeptide reads, in one-letter code: Protein LAZY 1 (416 aa).

Residues 63 to 83 (FTFGGSGLLTIGTLGIAAVAI) form a helical membrane-spanning segment. The short motif at 69–75 (GLLTIGT) is the IGT motif element. Disordered stretches follow at residues 266–306 (AAAA…GMPA) and 337–361 (KKSR…DGPL). Positions 270-282 (GVGGDRAGKGGGY) are enriched in gly residues. Positions 278–295 (KGGGYKTMKKRKVKDEKG) match the Nuclear localization signal motif.

It belongs to the LAZY family. Expressed specifically in the cells at the inner side of the vascular bundles of young leaf sheaths and peripheral cylinders of vascular bundles in the unelongated stems. Expressed in the leaf sheath pulvinus and the lamina joint.

It is found in the cell membrane. The protein resides in the nucleus. Its function is as follows. Involved in the regulation of shoot gravitropism and tiller angle through negative regulation of basipetal polar auxin transport (PAT). Acts as positive regulator of lateral auxin transport. Promotes vertical shoot growth. LAZY1 and TAC1 play opposite functions in the regulation of tiller growth angle. This is Protein LAZY 1 from Oryza sativa subsp. japonica (Rice).